Here is a 511-residue protein sequence, read N- to C-terminus: UPF0288 protein MK0796 (511 aa).

The protein belongs to the UPF0288 family.

This is UPF0288 protein MK0796 from Methanopyrus kandleri (strain AV19 / DSM 6324 / JCM 9639 / NBRC 100938).